The primary structure comprises 301 residues: Haloalkane dehalogenase (301 aa).

The Nucleophile role is filled by aspartate 123. Catalysis depends on aspartate 250, which acts as the Proton donor. Histidine 279 acts as the Proton acceptor in catalysis.

It belongs to the haloalkane dehalogenase family. Type 1 subfamily. As to quaternary structure, monomer.

It carries out the reaction 1-haloalkane + H2O = a halide anion + a primary alcohol + H(+). In terms of biological role, catalyzes hydrolytic cleavage of carbon-halogen bonds in halogenated aliphatic compounds, leading to the formation of the corresponding primary alcohols, halide ions and protons. The protein is Haloalkane dehalogenase of Phenylobacterium zucineum (strain HLK1).